Consider the following 120-residue polypeptide: uncharacterized protein (120 aa).

This sequence to phage T4 y06Q.

This is an uncharacterized protein from Escherichia coli (strain K12).